The sequence spans 298 residues: NADH-cytochrome b5 reductase 1 (298 aa).

The helical transmembrane segment at 14 to 34 threads the bilayer; the sequence is VILAGAYLIDPSALPFVAAGV. The FAD-binding FR-type domain maps to 56 to 159; that stretch reads KEYRKFKLVD…RGPKGQFSYT (104 aa). Residues 139-154 and 165-197 contribute to the FAD site; these read SELS…GPKG and AIGM…QVNF.

Belongs to the flavoprotein pyridine nucleotide cytochrome reductase family. Monomer. Component of the 2-(3-amino-3-carboxypropyl)histidine synthase complex composed of DPH1, DPH2, DPH3 and a NADH-dependent reductase, predominantly CBR1. The cofactor is FAD.

The protein resides in the mitochondrion outer membrane. The enzyme catalyses 2 Fe(III)-[cytochrome b5] + NADH = 2 Fe(II)-[cytochrome b5] + NAD(+) + H(+). The catalysed reaction is 2 Fe(3+)-[Dph3] + NADH = 2 Fe(2+)-[Dph3] + NAD(+) + H(+). It functions in the pathway protein modification; peptidyl-diphthamide biosynthesis. Its function is as follows. NADH-dependent reductase for DPH3 and cytochrome b5. Required for the first step of diphthamide biosynthesis, a post-translational modification of histidine which occurs in elongation factor 2. DPH1 and DPH2 transfer a 3-amino-3-carboxypropyl (ACP) group from S-adenosyl-L-methionine (SAM) to a histidine residue, the reaction is assisted by a reduction system comprising DPH3 and a NADH-dependent reductase, predominantly CBR1. By reducing DPH3, also involved in the formation of the tRNA wobble base modification mcm5s 2U (5-methoxycarbonylmethyl-2-thiouridine), mediated by the elongator complex. The cytochrome b5/NADH cytochrome b5 reductase electron transfer system supports the catalytic activity of several sterol biosynthetic enzymes. The protein is NADH-cytochrome b5 reductase 1 (CBR1) of Mortierella alpina (Oleaginous fungus).